Here is a 542-residue protein sequence, read N- to C-terminus: Homeobox and leucine zipper protein Homez (542 aa).

The homeobox 1 DNA-binding region spans 55-114 (WTQAIQTSELDGNEHLLQAFSYFPYPSLADIALLCLRHGLQMEKVKTWFMAQRLRCGISW). The interval 165–193 (LSPLAPSEQPTHMKGLKVEPEEPSQVSQL) is disordered. Glycyl lysine isopeptide (Lys-Gly) (interchain with G-Cter in SUMO2) cross-links involve residues Lys-181 and Lys-201. The interval 250-307 (VHQPDKPASVSLLDNSCKEESEPSGIPPSSSTSSPSFQALANGTTATPKPLQPLGCIS) is disordered. Over residues 272-285 (PSGIPPSSSTSSPS) the composition is skewed to low complexity. Residues 286–296 (FQALANGTTAT) show a composition bias toward polar residues. Ser-345 carries the post-translational modification Phosphoserine. 2 DNA-binding regions (homeobox) span residues 349 to 409 (QHQR…KHGQ) and 443 to 502 (TPPL…AEVV). A Nuclear localization signal motif is present at residues 352–357 (RKTKRK). Disordered stretches follow at residues 424 to 454 (FQDP…PPPD) and 501 to 542 (VVVC…IIWD). Thr-443 bears the Phosphothreonine mark. Pro residues predominate over residues 444-454 (PPLPAPPPPPD). The span at 505 to 542 (LDEEDEEDEEDELPEDGEEEEEEEEDDDDGDDDVIIWD) shows a compositional bias: acidic residues.

As to quaternary structure, homodimer or heterodimer (Potential). Interacts with HOXC8. In terms of tissue distribution, ubiquitous. Strongly expressed in testis.

It is found in the nucleus. May function as a transcriptional regulator. This is Homeobox and leucine zipper protein Homez (Homez) from Mus musculus (Mouse).